Here is a 156-residue protein sequence, read N- to C-terminus: 6,7-dimethyl-8-ribityllumazine synthase (156 aa).

5-amino-6-(D-ribitylamino)uracil is bound by residues F23, 57 to 59 (SFE), and 81 to 83 (AVI). 86-87 (GT) is a (2S)-2-hydroxy-3-oxobutyl phosphate binding site. Catalysis depends on H89, which acts as the Proton donor. Y114 lines the 5-amino-6-(D-ribitylamino)uracil pocket. R128 is a binding site for (2S)-2-hydroxy-3-oxobutyl phosphate.

This sequence belongs to the DMRL synthase family. In terms of assembly, forms an icosahedral capsid composed of 60 subunits, arranged as a dodecamer of pentamers.

The enzyme catalyses (2S)-2-hydroxy-3-oxobutyl phosphate + 5-amino-6-(D-ribitylamino)uracil = 6,7-dimethyl-8-(1-D-ribityl)lumazine + phosphate + 2 H2O + H(+). The protein operates within cofactor biosynthesis; riboflavin biosynthesis; riboflavin from 2-hydroxy-3-oxobutyl phosphate and 5-amino-6-(D-ribitylamino)uracil: step 1/2. Functionally, catalyzes the formation of 6,7-dimethyl-8-ribityllumazine by condensation of 5-amino-6-(D-ribitylamino)uracil with 3,4-dihydroxy-2-butanone 4-phosphate. This is the penultimate step in the biosynthesis of riboflavin. The sequence is that of 6,7-dimethyl-8-ribityllumazine synthase from Halorhodospira halophila (strain DSM 244 / SL1) (Ectothiorhodospira halophila (strain DSM 244 / SL1)).